The sequence spans 258 residues: Mediator of RNA polymerase II transcription subunit 7 (258 aa).

2 disordered regions span residues 1-39 (MLPG…PPPH) and 202-243 (EKET…PPSV). The segment covering 203-217 (KETEEDEEMKEDDEE) has biased composition (acidic residues). Residues 220-229 (STSSSEGNQK) are compositionally biased toward polar residues.

This sequence belongs to the Mediator complex subunit 7 family. As to quaternary structure, component of the Mediator complex.

It localises to the nucleus. Its function is as follows. Component of the Mediator complex, a coactivator involved in the regulated transcription of nearly all RNA polymerase II-dependent genes. Mediator functions as a bridge to convey information from gene-specific regulatory proteins to the basal RNA polymerase II transcription machinery. Mediator is recruited to promoters by direct interactions with regulatory proteins and serves as a scaffold for the assembly of a functional preinitiation complex with RNA polymerase II and the general transcription factors. In Caenorhabditis briggsae, this protein is Mediator of RNA polymerase II transcription subunit 7 (let-49).